The sequence spans 181 residues: CDP-diacylglycerol--glycerol-3-phosphate 3-phosphatidyltransferase (181 aa).

Transmembrane regions (helical) follow at residues 8-28 (PNYL…LFYI), 35-55 (KLGA…GYIA), 64-84 (FGKM…TIML), and 148-168 (IIYL…LTII).

It belongs to the CDP-alcohol phosphatidyltransferase class-I family.

It is found in the cell membrane. The enzyme catalyses a CDP-1,2-diacyl-sn-glycerol + sn-glycerol 3-phosphate = a 1,2-diacyl-sn-glycero-3-phospho-(1'-sn-glycero-3'-phosphate) + CMP + H(+). The protein operates within phospholipid metabolism; phosphatidylglycerol biosynthesis; phosphatidylglycerol from CDP-diacylglycerol: step 1/2. Functionally, this protein catalyzes the committed step to the synthesis of the acidic phospholipids. The protein is CDP-diacylglycerol--glycerol-3-phosphate 3-phosphatidyltransferase (pgsA) of Rickettsia prowazekii (strain Madrid E).